Here is a 254-residue protein sequence, read N- to C-terminus: Glutamate racemase (254 aa).

Residues 7 to 8 (DS) and 39 to 40 (YG) contribute to the substrate site. Cys-70 (proton donor/acceptor) is an active-site residue. Residue 71–72 (NT) participates in substrate binding. Cys-178 functions as the Proton donor/acceptor in the catalytic mechanism. 179–180 (TH) contacts substrate.

This sequence belongs to the aspartate/glutamate racemases family.

The catalysed reaction is L-glutamate = D-glutamate. It participates in cell wall biogenesis; peptidoglycan biosynthesis. Provides the (R)-glutamate required for cell wall biosynthesis. The polypeptide is Glutamate racemase (Aquifex aeolicus (strain VF5)).